We begin with the raw amino-acid sequence, 274 residues long: MTGSIFEGKWQYVDHTTGLQPMQSFSFDDMYCHLVGQGNDAVVRTWVHNHVVILGIHDARLPYLAEGIEYLNNKGYGAIVRNSGGLGVVLDAGVLNISLIFKGDISFSIDAGYEYMYELVQEMFASYGKRIEAKEITRSYCPGSYDLSIDGKKFAGISQRRVKGGIAVQIYLCIEGSGSERAELMRQFYDIALRGEVTKFHYPDIDSSCMASLEELLETELSVEEVLFKLLFAMKTLGATLSNNEMTNDMWTLYNIYFERMIERNSKLKINQEG.

The 206-residue stretch at 37–242 (QGNDAVVRTW…AMKTLGATLS (206 aa)) folds into the BPL/LPL catalytic domain. Residue C141 is the Acyl-thioester intermediate of the active site.

It belongs to the octanoyltransferase LipL family.

The enzyme catalyses N(6)-octanoyl-L-lysyl-[glycine-cleavage complex H protein] + L-lysyl-[lipoyl-carrier protein] = N(6)-octanoyl-L-lysyl-[lipoyl-carrier protein] + L-lysyl-[glycine-cleavage complex H protein]. It participates in protein modification; protein lipoylation via endogenous pathway; protein N(6)-(lipoyl)lysine from octanoyl-[acyl-carrier-protein]. Functionally, catalyzes the amidotransfer (transamidation) of the octanoyl moiety from octanoyl-GcvH to the lipoyl domain of the E2 subunit of lipoate-dependent enzymes. The chain is Octanoyl-[GcvH]:protein N-octanoyltransferase from Macrococcus caseolyticus (strain JCSC5402) (Macrococcoides caseolyticum).